A 443-amino-acid polypeptide reads, in one-letter code: Threonine/serine transporter TdcC (443 aa).

Transmembrane regions (helical) follow at residues 22 to 42 (TTWT…FFPI), 44 to 64 (AGFG…PIAF), 97 to 117 (GVVI…IYGV), 140 to 160 (FVAL…KDLM), 163 to 183 (VMSY…LSLI), 207 to 227 (ILIT…FSPI), 261 to 281 (MLMV…LSPA), 311 to 331 (FAIT…FKSF), 366 to 386 (LSMI…PNIL), 389 to 409 (IEAM…MYAI), and 423 to 443 (DNVF…YKLF).

Belongs to the amino acid/polyamine transporter 2 family. SdaC/TdcC subfamily.

It localises to the cell inner membrane. It carries out the reaction L-threonine(in) + H(+)(in) = L-threonine(out) + H(+)(out). The enzyme catalyses L-serine(in) + H(+)(in) = L-serine(out) + H(+)(out). Functionally, involved in the import of threonine and serine into the cell, with the concomitant import of a proton (symport system). The chain is Threonine/serine transporter TdcC from Shigella flexneri serotype 5b (strain 8401).